Consider the following 376-residue polypeptide: Chlorophyll synthase, chloroplastic (376 aa).

A chloroplast-targeting transit peptide spans 1 to 47 (MATSHLLAAASSTAASSATFRPPLLSLRSPPPSSLRLNRRRHFQVVR). Positions 48-69 (AAETDKETKANAPEKAPAGGSS) are disordered. 8 helical membrane passes run 95–115 (PVTW…SGNF), 171–191 (VITQ…LLDV), 197–217 (FPII…YSAP), 230–250 (FALG…LFGT), 255–275 (IVVL…VNDF), 300–320 (WICV…LFSS), 325–345 (YALA…QYFL), and 355–375 (YQAS…LATS).

Belongs to the UbiA prenyltransferase family. Chlorophyll synthase subfamily.

The protein localises to the plastid. It localises to the chloroplast membrane. The enzyme catalyses phytyl diphosphate + chlorophyllide a + H(+) = chlorophyll a + diphosphate. Functionally, involved in one of the last steps of the biosynthesis of chlorophyll a. The polypeptide is Chlorophyll synthase, chloroplastic (CHLG) (Oryza sativa subsp. japonica (Rice)).